We begin with the raw amino-acid sequence, 118 residues long: MAEQITSARATAKIVRVAPRKARLVLDTIRRKSVNEAYAILKFLPNTSTEDIYKVLNSAVANAENNFSLDREDLIVKEAFANEGPTLKRFRPRAKGSASPINKRTSHITIVVAEKEAK.

It belongs to the universal ribosomal protein uL22 family. Part of the 50S ribosomal subunit.

This protein binds specifically to 23S rRNA; its binding is stimulated by other ribosomal proteins, e.g. L4, L17, and L20. It is important during the early stages of 50S assembly. It makes multiple contacts with different domains of the 23S rRNA in the assembled 50S subunit and ribosome. In terms of biological role, the globular domain of the protein is located near the polypeptide exit tunnel on the outside of the subunit, while an extended beta-hairpin is found that lines the wall of the exit tunnel in the center of the 70S ribosome. The protein is Large ribosomal subunit protein uL22 of Leuconostoc citreum (strain KM20).